Here is a 306-residue protein sequence, read N- to C-terminus: HORMA domain-containing protein 2 (306 aa).

One can recognise an HORMA domain in the interval 29–232 (HESLIMVKKL…TGFHSMKVKV (204 aa)).

In terms of assembly, interacts with HORMAD1. Phosphorylated in a SPO11-dependent manner.

The protein localises to the nucleus. Its subcellular location is the chromosome. Essential for synapsis surveillance during meiotic prophase via the recruitment of ATR activity. Plays a key role in the male mid-pachytene checkpoint and the female meiotic prophase checkpoint: required for efficient build-up of ATR activity on unsynapsed chromosome regions, a process believed to form the basis of meiotic silencing of unsynapsed chromatin (MSUC) and meiotic prophase quality control in both sexes. Required for the DNA double-strand break-independent, BRCA1-dependent activation of ATR on the sex chromosomes that is essential for normal sex body formation. This Bos taurus (Bovine) protein is HORMA domain-containing protein 2 (HORMAD2).